The following is a 436-amino-acid chain: Probable protein phosphatase 2C 15 (436 aa).

The region spanning 30–302 is the PPM-type phosphatase domain; the sequence is KAAKMEKPIV…DDTTCIVVDI (273 aa). Residues D78, G79, D254, and D293 each contribute to the Mn(2+) site.

It belongs to the PP2C family. It depends on Mg(2+) as a cofactor. The cofactor is Mn(2+).

It carries out the reaction O-phospho-L-seryl-[protein] + H2O = L-seryl-[protein] + phosphate. The catalysed reaction is O-phospho-L-threonyl-[protein] + H2O = L-threonyl-[protein] + phosphate. In Arabidopsis thaliana (Mouse-ear cress), this protein is Probable protein phosphatase 2C 15.